A 142-amino-acid polypeptide reads, in one-letter code: Small ribosomal subunit protein uS12z (142 aa).

Pro61 is subject to Hydroxyproline.

It belongs to the universal ribosomal protein uS12 family.

This is Small ribosomal subunit protein uS12z (RPS23A) from Arabidopsis thaliana (Mouse-ear cress).